The primary structure comprises 154 residues: 3-dehydroquinate dehydratase (154 aa).

Y26 acts as the Proton acceptor in catalysis. 3 residues coordinate substrate: N77, H83, and D90. The active-site Proton donor is H103. Residues 104 to 105 (IS) and R114 contribute to the substrate site.

It belongs to the type-II 3-dehydroquinase family. In terms of assembly, homododecamer.

It carries out the reaction 3-dehydroquinate = 3-dehydroshikimate + H2O. It functions in the pathway metabolic intermediate biosynthesis; chorismate biosynthesis; chorismate from D-erythrose 4-phosphate and phosphoenolpyruvate: step 3/7. In terms of biological role, catalyzes a trans-dehydration via an enolate intermediate. The chain is 3-dehydroquinate dehydratase from Buchnera aphidicola subsp. Baizongia pistaciae (strain Bp).